The following is a 754-amino-acid chain: 5-methyltetrahydropteroyltriglutamate--homocysteine methyltransferase (754 aa).

Residues 17 to 20 (RELK) and Lys117 contribute to the 5-methyltetrahydropteroyltri-L-glutamate site. Residues 431–433 (IGS) and Glu484 contribute to the L-homocysteine site. Residues 431–433 (IGS) and Glu484 contribute to the L-methionine site. Residues 515–516 (RC) and Trp561 each bind 5-methyltetrahydropteroyltri-L-glutamate. Asp599 contributes to the L-homocysteine binding site. Residue Asp599 participates in L-methionine binding. Glu605 contacts 5-methyltetrahydropteroyltri-L-glutamate. Zn(2+)-binding residues include His641, Cys643, and Glu665. Catalysis depends on His694, which acts as the Proton donor. Cys726 provides a ligand contact to Zn(2+).

This sequence belongs to the vitamin-B12 independent methionine synthase family. It depends on Zn(2+) as a cofactor.

It catalyses the reaction 5-methyltetrahydropteroyltri-L-glutamate + L-homocysteine = tetrahydropteroyltri-L-glutamate + L-methionine. It participates in amino-acid biosynthesis; L-methionine biosynthesis via de novo pathway; L-methionine from L-homocysteine (MetE route): step 1/1. In terms of biological role, catalyzes the transfer of a methyl group from 5-methyltetrahydrofolate to homocysteine resulting in methionine formation. This is 5-methyltetrahydropteroyltriglutamate--homocysteine methyltransferase from Salmonella paratyphi B (strain ATCC BAA-1250 / SPB7).